The following is a 345-amino-acid chain: Putative F-box protein At3g17265 (345 aa).

An F-box domain is found at 1–46 (MMFAYLPPDLESEILSRVPATFLKELQTTCKRWYALFRDPIFVKKN).

The chain is Putative F-box protein At3g17265 from Arabidopsis thaliana (Mouse-ear cress).